The following is a 252-amino-acid chain: tRNA (guanine-N(1)-)-methyltransferase (252 aa).

Residues Gly-117 and 137-142 (IGDYVL) contribute to the S-adenosyl-L-methionine site.

The protein belongs to the RNA methyltransferase TrmD family. In terms of assembly, homodimer.

Its subcellular location is the cytoplasm. The enzyme catalyses guanosine(37) in tRNA + S-adenosyl-L-methionine = N(1)-methylguanosine(37) in tRNA + S-adenosyl-L-homocysteine + H(+). In terms of biological role, specifically methylates guanosine-37 in various tRNAs. The protein is tRNA (guanine-N(1)-)-methyltransferase of Idiomarina loihiensis (strain ATCC BAA-735 / DSM 15497 / L2-TR).